A 240-amino-acid chain; its full sequence is MANITLSTQHYRIHRSDVEPVKEKTTDKDVFAKSITAVRNSFISLSTSLSDRFSLHLQTDIPTTHFHRGSASEGRAVLTSKTVKDFMLQKLNSLDIKGNASKDPAYARQTCEAMLSAVYSNNKDHCCKLLISKGVSITPFLKEIGEAAQNAGLPGEIKNGVFTPGGAGANPFVVPLIAAASIKYPHMFINHNQQVSFKAYAEKIVMKEVTPLFNKGTMPTPQQFQLTIENIANKYLQNAS.

Residues 78 to 240 (LTSKTVKDFM…IANKYLQNAS (163 aa)) form a GEF catalytic domain region.

It belongs to the GEF (guanine exchange factor) SopE family.

It is found in the secreted. Activator for CDC42 by directly engaging this Rho GTPase and acting as potent guanine nucleotide exchange factor (GEF). This activation results in actin cytoskeleton rearrangements and stimulates membrane ruffling, promoting bacterial entry into non-phagocytic cells. Chaperone InvB is required for secretion, translocation and stabilization of intracellular levels of sopE2. This is Guanine nucleotide exchange factor sopE2 (sopE2) from Salmonella paratyphi A (strain ATCC 9150 / SARB42).